The primary structure comprises 23 residues: Dahlein-4.3 (23 aa).

In terms of tissue distribution, expressed by the skin dorsal glands.

It localises to the secreted. Functionally, has no antimicrobial activity. This chain is Dahlein-4.3, found in Ranoidea dahlii (Dahl's aquatic frog).